The primary structure comprises 435 residues: Ribosomal protein uS12 methylthiotransferase RimO (435 aa).

The MTTase N-terminal domain maps to 3–113 (HKVGFVSLGC…VVNAVHQHLP (111 aa)). [4Fe-4S] cluster is bound by residues cysteine 12, cysteine 48, cysteine 77, cysteine 144, cysteine 148, and cysteine 151. Residues 130–367 (LTPRHYAYLK…MQVQAEISRN (238 aa)) form the Radical SAM core domain. One can recognise a TRAM domain in the interval 370–435 (KNKIGSTQTV…DDYDLYASLV (66 aa)).

It belongs to the methylthiotransferase family. RimO subfamily. Requires [4Fe-4S] cluster as cofactor.

The protein localises to the cytoplasm. The catalysed reaction is L-aspartate(89)-[ribosomal protein uS12]-hydrogen + (sulfur carrier)-SH + AH2 + 2 S-adenosyl-L-methionine = 3-methylsulfanyl-L-aspartate(89)-[ribosomal protein uS12]-hydrogen + (sulfur carrier)-H + 5'-deoxyadenosine + L-methionine + A + S-adenosyl-L-homocysteine + 2 H(+). In terms of biological role, catalyzes the methylthiolation of an aspartic acid residue of ribosomal protein uS12. In Legionella pneumophila (strain Lens), this protein is Ribosomal protein uS12 methylthiotransferase RimO.